The primary structure comprises 101 residues: NADH-quinone oxidoreductase subunit K (101 aa).

A run of 3 helical transmembrane segments spans residues leucine 4–leucine 24, isoleucine 30–phenylalanine 50, and phenylalanine 62–valine 82.

Belongs to the complex I subunit 4L family. In terms of assembly, NDH-1 is composed of 14 different subunits. Subunits NuoA, H, J, K, L, M, N constitute the membrane sector of the complex.

Its subcellular location is the cell inner membrane. It catalyses the reaction a quinone + NADH + 5 H(+)(in) = a quinol + NAD(+) + 4 H(+)(out). In terms of biological role, NDH-1 shuttles electrons from NADH, via FMN and iron-sulfur (Fe-S) centers, to quinones in the respiratory chain. The immediate electron acceptor for the enzyme in this species is believed to be ubiquinone. Couples the redox reaction to proton translocation (for every two electrons transferred, four hydrogen ions are translocated across the cytoplasmic membrane), and thus conserves the redox energy in a proton gradient. This chain is NADH-quinone oxidoreductase subunit K, found in Xylella fastidiosa (strain 9a5c).